Here is a 200-residue protein sequence, read N- to C-terminus: Diadenylate cyclase (200 aa).

A helical transmembrane segment spans residues I5–A25. Residues N28–N185 enclose the DAC domain.

Belongs to the adenylate cyclase family. DacB/CdaS subfamily. In terms of assembly, probably oligomerizes.

The protein localises to the cell membrane. It carries out the reaction 2 ATP = 3',3'-c-di-AMP + 2 diphosphate. Its function is as follows. Catalyzes the condensation of 2 ATP molecules into cyclic di-AMP (c-di-AMP), a second messenger used to regulate differing processes in different bacteria. This is Diadenylate cyclase from Mycoplasma genitalium (strain ATCC 33530 / DSM 19775 / NCTC 10195 / G37) (Mycoplasmoides genitalium).